Reading from the N-terminus, the 354-residue chain is Selenide, water dikinase (354 aa).

Residue Cys-23 is part of the active site. ATP-binding positions include Lys-26 and Thr-54–Asp-56. Asp-57 contributes to the Mg(2+) binding site. ATP-binding positions include Asp-74, Asp-97, and Gly-145–Ser-147. Mg(2+) is bound at residue Asp-97. Asp-233 is a binding site for Mg(2+).

This sequence belongs to the selenophosphate synthase 1 family. Class I subfamily. Homodimer. Requires Mg(2+) as cofactor.

The enzyme catalyses hydrogenselenide + ATP + H2O = selenophosphate + AMP + phosphate + 2 H(+). Synthesizes selenophosphate from selenide and ATP. In Burkholderia ambifaria (strain MC40-6), this protein is Selenide, water dikinase.